The sequence spans 513 residues: Alpha-amylase mde5 (513 aa).

Residues 1–25 (MKHNEVFGWTLKVLSFLLVVIPANA) form the signal peptide. Cysteines 52 and 60 form a disulfide. Tryptophan 105 provides a ligand contact to substrate. Asparagine 143 contacts Ca(2+). A substrate-binding site is contributed by histidine 144. An N-linked (GlcNAc...) asparagine glycan is attached at asparagine 162. A disulfide bridge connects residues cysteine 171 and cysteine 184. Residues glutamate 182 and aspartate 195 each contribute to the Ca(2+) site. Arginine 224 is a binding site for substrate. Ca(2+) contacts are provided by aspartate 226, histidine 230, and glutamate 250. The active-site Nucleophile is the aspartate 226. A substrate-binding site is contributed by 229-230 (KH). The active-site Proton donor is glutamate 250. Residue glycine 254 participates in substrate binding. A disulfide bond links cysteine 260 and cysteine 304. Aspartate 318 contacts substrate. Asparagine 357 carries an N-linked (GlcNAc...) asparagine glycan. Arginine 365 is a binding site for substrate. A disulfide bond links cysteine 454 and cysteine 488.

It belongs to the glycosyl hydrolase 13 family. Requires Ca(2+) as cofactor.

Its subcellular location is the endoplasmic reticulum. It catalyses the reaction Endohydrolysis of (1-&gt;4)-alpha-D-glucosidic linkages in polysaccharides containing three or more (1-&gt;4)-alpha-linked D-glucose units.. The protein is Alpha-amylase mde5 (mde5) of Schizosaccharomyces pombe (strain 972 / ATCC 24843) (Fission yeast).